A 336-amino-acid chain; its full sequence is UPF0104 membrane protein MJ1595 (336 aa).

Transmembrane regions (helical) follow at residues 9-29, 40-60, 68-88, 127-147, 154-174, 223-243, 245-265, 285-305, and 306-326; these read STIL…YIGL, NPEY…ILSA, ILGY…GLFI, VLDT…FVVT, YLIL…YLIA, WEVV…ILKL, LLFL…VYLI, VMIL…AVTL, and LDRL…MLII.

It belongs to the UPF0104 family.

It localises to the cell membrane. This is UPF0104 membrane protein MJ1595 from Methanocaldococcus jannaschii (strain ATCC 43067 / DSM 2661 / JAL-1 / JCM 10045 / NBRC 100440) (Methanococcus jannaschii).